A 143-amino-acid polypeptide reads, in one-letter code: Putative phosphotransferase IIA component SgcA (143 aa).

In terms of domain architecture, PTS EIIA type-2 spans Met1–Gly143. Residue His63 is the Tele-phosphohistidine intermediate of the active site.

The protein localises to the cytoplasm. Functionally, the phosphoenolpyruvate-dependent sugar phosphotransferase system (sugar PTS), a major carbohydrate active -transport system, catalyzes the phosphorylation of incoming sugar substrates concomitantly with their translocation across the cell membrane. This Escherichia coli (strain K12) protein is Putative phosphotransferase IIA component SgcA (sgcA).